The chain runs to 160 residues: Transcription antitermination protein NusB (160 aa).

The protein belongs to the NusB family.

Its function is as follows. Involved in transcription antitermination. Required for transcription of ribosomal RNA (rRNA) genes. Binds specifically to the boxA antiterminator sequence of the ribosomal RNA (rrn) operons. The chain is Transcription antitermination protein NusB from Rhizobium johnstonii (strain DSM 114642 / LMG 32736 / 3841) (Rhizobium leguminosarum bv. viciae).